A 2998-amino-acid polypeptide reads, in one-letter code: Probable polyketide synthase 14 (2998 aa).

Residues 19–456 (EDDIAIIGIG…GSNCCLILSE (438 aa)) form the Ketosynthase family 3 (KS3) domain. Catalysis depends on for beta-ketoacyl synthase activity residues C189, H331, and H376. Residues 657–690 (GIEASFIVGHSLGEIPAAYCSGMITLDTLCYLIY) are acyl/malonyl transferase. Catalysis depends on S667, which acts as the For acyl/malonyl transferase activity. The segment at 962-1084 (IDQLGFSLIE…GNFQLFTSGN (123 aa)) is N-terminal hotdog fold. Residues 962–1249 (IDQLGFSLIE…CKSLTIIKDS (288 aa)) enclose the PKS/mFAS DH domain. Catalysis depends on H996, which acts as the Proton acceptor; for dehydratase activity. The tract at residues 1101 to 1249 (NLTKLTKNEL…CKSLTIIKDS (149 aa)) is C-terminal hotdog fold. D1159 acts as the Proton donor; for dehydratase activity in catalysis. Residues 1979–1999 (SILIHSGSGGIGLSALNILKW) form a helical membrane-spanning segment. The Carrier domain maps to 2476–2553 (ENDTSIDSLF…SSIKLITNQL (78 aa)). Residue S2513 is modified to O-(pantetheine 4'-phosphoryl)serine. Residues 2559-2578 (DGQQQQHRQNKKNNNIPENK) form a disordered region. The segment covering 2561–2573 (QQQQHRQNKKNNN) has biased composition (low complexity). The chain crosses the membrane as a helical span at residues 2621-2641 (IFLTGSTGFLGAYLLWYLIQM).

Pantetheine 4'-phosphate serves as cofactor.

The protein localises to the membrane. In terms of biological role, probable polyketide synthase. This chain is Probable polyketide synthase 14 (pks14), found in Dictyostelium discoideum (Social amoeba).